The primary structure comprises 152 residues: UPF0756 membrane protein JDM1_1594 (152 aa).

4 consecutive transmembrane segments (helical) span residues 25-45, 52-72, 85-105, and 115-135; these read ATVVVLLIKLIPNTSKLLTTI, WGVTVITVAILIPIATGQIGF, WIAVACGVLVSVLSFHGVGLL, and LVFGTIMGVVLLKGIAAGPII.

Belongs to the UPF0756 family.

It is found in the cell membrane. The chain is UPF0756 membrane protein JDM1_1594 from Lactiplantibacillus plantarum (strain JDM1) (Lactobacillus plantarum).